Reading from the N-terminus, the 399-residue chain is Enoyl-[acyl-carrier-protein] reductase [NADH] (399 aa).

NAD(+) is bound by residues 48–53, 74–75, 111–112, and 139–140; these read GASTGY, FE, DA, and LA. Tyr225 provides a ligand contact to substrate. Tyr235 functions as the Proton donor in the catalytic mechanism. Residues Lys244 and 274 to 276 contribute to the NAD(+) site; that span reads VVT.

The protein belongs to the TER reductase family. Monomer.

The enzyme catalyses a 2,3-saturated acyl-[ACP] + NAD(+) = a (2E)-enoyl-[ACP] + NADH + H(+). It functions in the pathway lipid metabolism; fatty acid biosynthesis. Functionally, involved in the final reduction of the elongation cycle of fatty acid synthesis (FAS II). Catalyzes the reduction of a carbon-carbon double bond in an enoyl moiety that is covalently linked to an acyl carrier protein (ACP). The chain is Enoyl-[acyl-carrier-protein] reductase [NADH] from Yersinia pseudotuberculosis serotype O:1b (strain IP 31758).